We begin with the raw amino-acid sequence, 318 residues long: NADH-ubiquinone oxidoreductase chain 1 (318 aa).

8 consecutive transmembrane segments (helical) span residues 2–22 (FMIN…FLTL), 70–90 (MFII…IPLP), 100–120 (LGIL…LWSG), 147–167 (AIIL…TLII), 171–191 (YLWL…STLA), 217–237 (AGPF…MNIF), 253–273 (ELYS…FLWI), and 294–314 (LPLT…LSSI).

The protein belongs to the complex I subunit 1 family. In terms of assembly, core subunit of respiratory chain NADH dehydrogenase (Complex I) which is composed of 45 different subunits.

The protein localises to the mitochondrion inner membrane. The enzyme catalyses a ubiquinone + NADH + 5 H(+)(in) = a ubiquinol + NAD(+) + 4 H(+)(out). In terms of biological role, core subunit of the mitochondrial membrane respiratory chain NADH dehydrogenase (Complex I) which catalyzes electron transfer from NADH through the respiratory chain, using ubiquinone as an electron acceptor. Essential for the catalytic activity and assembly of complex I. This chain is NADH-ubiquinone oxidoreductase chain 1 (MT-ND1), found in Equus caballus (Horse).